The chain runs to 412 residues: Serine hydroxymethyltransferase (412 aa).

(6S)-5,6,7,8-tetrahydrofolate-binding positions include leucine 120 and 124 to 126 (GHL). Residue lysine 229 is modified to N6-(pyridoxal phosphate)lysine. 352-354 (SPF) is a (6S)-5,6,7,8-tetrahydrofolate binding site.

Belongs to the SHMT family. As to quaternary structure, homodimer. It depends on pyridoxal 5'-phosphate as a cofactor.

It is found in the cytoplasm. It carries out the reaction (6R)-5,10-methylene-5,6,7,8-tetrahydrofolate + glycine + H2O = (6S)-5,6,7,8-tetrahydrofolate + L-serine. The protein operates within one-carbon metabolism; tetrahydrofolate interconversion. It functions in the pathway amino-acid biosynthesis; glycine biosynthesis; glycine from L-serine: step 1/1. Functionally, catalyzes the reversible interconversion of serine and glycine with tetrahydrofolate (THF) serving as the one-carbon carrier. This reaction serves as the major source of one-carbon groups required for the biosynthesis of purines, thymidylate, methionine, and other important biomolecules. Also exhibits THF-independent aldolase activity toward beta-hydroxyamino acids, producing glycine and aldehydes, via a retro-aldol mechanism. The protein is Serine hydroxymethyltransferase of Ruminiclostridium cellulolyticum (strain ATCC 35319 / DSM 5812 / JCM 6584 / H10) (Clostridium cellulolyticum).